A 338-amino-acid chain; its full sequence is Protein mono-ADP-ribosyltransferase PARP11 (338 aa).

Glu-13 bears the ADP-ribosyl glutamic acid mark. An N6-(ADP-ribosyl)lysine modification is found at Lys-18. A WWE domain is found at 22 to 106; that stretch reads NEVDDMDTSD…TTGKQRLIKR (85 aa). Cys-56 and Cys-72 each carry ADP-ribosylcysteine. Asp-87 carries the ADP-ribosyl aspartic acid modification. Residues 123-338 form the PARP catalytic domain; sequence IPMPPHWENV…IYPEYLIDFH (216 aa).

It belongs to the ARTD/PARP family. In terms of assembly, interacts with PARP12; this interaction plays a role in zika virus suppression. Post-translationally, auto-mono-ADP-ribosylated.

It is found in the nucleus. The protein localises to the nuclear pore complex. It carries out the reaction L-aspartyl-[protein] + NAD(+) = 4-O-(ADP-D-ribosyl)-L-aspartyl-[protein] + nicotinamide. The enzyme catalyses L-cysteinyl-[protein] + NAD(+) = S-(ADP-D-ribosyl)-L-cysteinyl-[protein] + nicotinamide + H(+). It catalyses the reaction L-glutamyl-[protein] + NAD(+) = 5-O-(ADP-D-ribosyl)-L-glutamyl-[protein] + nicotinamide. The catalysed reaction is L-lysyl-[protein] + NAD(+) = N(6)-(ADP-D-ribosyl)-L-lysyl-[protein] + nicotinamide + H(+). Functionally, mono-ADP-ribosyltransferase that mediates mono-ADP-ribosylation of target proteins. Plays a role in nuclear envelope stability and nuclear remodeling during spermiogenesis. Inhibits the type I interferon activated signaling pathway. Mechanistically, mono-ADP-ribosylates beta-TrCP/BTRC to promote IFNAR1 ubiquitination and protect BTRC from ubiquitin-proteasome degradation. Additionally, acts as an antiviral factor by cooperating with PARP12 to suppress Zika virus replication, independent of IFNAR1 regulation or intrinsic PARP enzymatic activity. Instead, facilitates the degradation of viral NS1 and NS3 proteins, potentially disrupting viral replication. This Homo sapiens (Human) protein is Protein mono-ADP-ribosyltransferase PARP11.